Here is a 382-residue protein sequence, read N- to C-terminus: Mannitol-1-phosphate 5-dehydrogenase (382 aa).

3–14 (ALHFGAGNIGRG) lines the NAD(+) pocket. Position 269 is an N6-acetyllysine (lysine 269).

The protein belongs to the mannitol dehydrogenase family.

The enzyme catalyses D-mannitol 1-phosphate + NAD(+) = beta-D-fructose 6-phosphate + NADH + H(+). This Escherichia coli O9:H4 (strain HS) protein is Mannitol-1-phosphate 5-dehydrogenase.